A 115-amino-acid chain; its full sequence is T cell receptor delta variable 1 (115 aa).

The signal sequence occupies residues 1–21 (MLFSSLLCVFVAFSYSGSSVA). The region spanning 22–115 (QKVTQAQSSV…SAKYFCALGE (94 aa)) is the Ig-like domain. A disulfide bridge links cysteine 43 with cysteine 111.

Gamma-delta TR is a heterodimer composed of a gamma and delta chain; disulfide-linked. The gamma-delta TR is associated with the transmembrane signaling CD3 coreceptor proteins following the stoichiometry: a single gamma-delta TR heterodimer associates with one CD3D-CD3E heterodimer, one CD3G-CD3E heterodimer and one CD247 homodimer forming a stable octameric structure. Upon activation, gamma-delta TR complex associates with FCER1G to initiate intracellular signaling.

It is found in the cell membrane. Its function is as follows. V region of the variable domain of T cell receptor (TR) delta chain that participates in the antigen recognition. Gamma-delta TRs recognize a variety of self and foreign non-peptide antigens frequently expressed at the epithelial boundaries between the host and external environment, including endogenous lipids presented by MH-like protein CD1D and phosphoantigens presented by butyrophilin-like molecule BTN3A1. Upon antigen recognition induces rapid, innate-like immune responses involved in pathogen clearance and tissue repair. Binding of gamma-delta TR complex to antigen triggers phosphorylation of immunoreceptor tyrosine-based activation motifs (ITAMs) in the CD3 chains by the LCK and FYN kinases, allowing the recruitment, phosphorylation, and activation of ZAP70 that facilitates phosphorylation of the scaffolding proteins LCP2 and LAT. This lead to the formation of a supramolecular signalosome that recruits the phospholipase PLCG1, resulting in calcium mobilization and ERK activation, ultimately leading to T cell expansion and differentiation into effector cells. Gamma-delta TRs are produced through somatic rearrangement of a limited repertoire of variable (V), diversity (D), and joining (J) genes. The potential diversity of gamma-delta TRs is conferred by the unique ability to rearrange (D) genes in tandem and to utilize all three reading frames. The combinatorial diversity is considerably increased by the sequence exonuclease trimming and random nucleotide (N) region additions which occur during the V-(D)-J rearrangements. This chain is T cell receptor delta variable 1, found in Homo sapiens (Human).